The primary structure comprises 182 residues: Large ribosomal subunit protein uL6 (182 aa).

This sequence belongs to the universal ribosomal protein uL6 family. Part of the 50S ribosomal subunit.

Functionally, this protein binds to the 23S rRNA, and is important in its secondary structure. It is located near the subunit interface in the base of the L7/L12 stalk, and near the tRNA binding site of the peptidyltransferase center. The chain is Large ribosomal subunit protein uL6 from Haloquadratum walsbyi (strain DSM 16790 / HBSQ001).